The primary structure comprises 108 residues: Movement protein TGB2 (108 aa).

The Cytoplasmic segment spans residues 1–8 (MPLTPPPD). A helical membrane pass occupies residues 9–29 (YTKPFIAVVVGGTLAAFVLLL). Topologically, residues 30–71 (TRNTLPHTGDNLHSLPHGGTYCDGTKRIRYGGPHRSHVPELP) are lumenal. A helical membrane pass occupies residues 72 to 92 (AKSWALITVVAILIALHFSCL). Residues 93-108 (RTHRVHRCVLCHTTSG) lie on the Cytoplasmic side of the membrane.

The protein belongs to the Tymovirales TGBp2 protein family.

Its subcellular location is the host endoplasmic reticulum membrane. Its function is as follows. Plays a role in viral cell-to-cell propagation, by facilitating genome transport to neighboring plant cells through plasmosdesmata,. This Lily virus X protein is Movement protein TGB2.